A 670-amino-acid polypeptide reads, in one-letter code: Probable Rho-GTPase-activating protein 9 (670 aa).

Positions 3–392 constitute an F-BAR domain; sequence DGFSNSFWSR…SFKNLDSLRD (390 aa). The tract at residues 141 to 161 is disordered; the sequence is NSKKSNLTDRKPIPTSRKSNK. The region spanning 425-622 is the Rho-GAP domain; it reads SSLTEDNLIV…DLINEFENLF (198 aa). Thr640 is modified (phosphothreonine). Residues 641–663 show a composition bias toward polar residues; that stretch reads PITTSPQKLKLPRSSSPCKNPSP. The disordered stretch occupies residues 641–670; that stretch reads PITTSPQKLKLPRSSSPCKNPSPTRRFRPF. Ser645 is subject to Phosphoserine.

Its subcellular location is the cytoplasm. This is Probable Rho-GTPase-activating protein 9 (rga9) from Schizosaccharomyces pombe (strain 972 / ATCC 24843) (Fission yeast).